A 283-amino-acid chain; its full sequence is Shikimate dehydrogenase (NADP(+)) (283 aa).

Shikimate contacts are provided by residues 19 to 21 (SRS) and threonine 66. Residue lysine 70 is the Proton acceptor of the active site. Glutamate 82 is a binding site for NADP(+). Positions 91 and 107 each coordinate shikimate. Residues 133–137 (GAGGA) and isoleucine 226 each bind NADP(+). Residue tyrosine 228 coordinates shikimate. An NADP(+)-binding site is contributed by glycine 249.

The protein belongs to the shikimate dehydrogenase family. In terms of assembly, homodimer.

The catalysed reaction is shikimate + NADP(+) = 3-dehydroshikimate + NADPH + H(+). The protein operates within metabolic intermediate biosynthesis; chorismate biosynthesis; chorismate from D-erythrose 4-phosphate and phosphoenolpyruvate: step 4/7. In terms of biological role, involved in the biosynthesis of the chorismate, which leads to the biosynthesis of aromatic amino acids. Catalyzes the reversible NADPH linked reduction of 3-dehydroshikimate (DHSA) to yield shikimate (SA). In Rhodospirillum rubrum (strain ATCC 11170 / ATH 1.1.1 / DSM 467 / LMG 4362 / NCIMB 8255 / S1), this protein is Shikimate dehydrogenase (NADP(+)).